A 313-amino-acid chain; its full sequence is Proline iminopeptidase (313 aa).

In terms of domain architecture, AB hydrolase-1 spans Lys-35–Glu-298. Residue Ser-110 is the Nucleophile of the active site. Residue Asp-266 is part of the active site. Catalysis depends on His-294, which acts as the Proton donor.

The protein belongs to the peptidase S33 family.

The protein resides in the cytoplasm. It carries out the reaction Release of N-terminal proline from a peptide.. In terms of biological role, specifically catalyzes the removal of N-terminal proline residues from peptides. In Xylella fastidiosa (strain 9a5c), this protein is Proline iminopeptidase (pip).